The following is a 329-amino-acid chain: Flotillin-like protein FloA (329 aa).

The next 2 helical transmembrane spans lie at 6–26 (FIVIAVIIIVALLILFSFVPI) and 27–47 (GLWISALAAGVHVGIGTLVGM).

Belongs to the flotillin-like FloA family. Homooligomerizes.

Its subcellular location is the cell membrane. The protein resides in the membrane raft. Found in functional membrane microdomains (FMM) that may be equivalent to eukaryotic membrane rafts. FMMs are highly dynamic and increase in number as cells age. Flotillins are thought to be important factors in membrane fluidity. This is Flotillin-like protein FloA from Staphylococcus aureus (strain JH1).